Here is a 362-residue protein sequence, read N- to C-terminus: Histidinol-phosphate aminotransferase (362 aa).

An N6-(pyridoxal phosphate)lysine modification is found at K218.

It belongs to the class-II pyridoxal-phosphate-dependent aminotransferase family. Histidinol-phosphate aminotransferase subfamily. In terms of assembly, homodimer. Requires pyridoxal 5'-phosphate as cofactor.

The enzyme catalyses L-histidinol phosphate + 2-oxoglutarate = 3-(imidazol-4-yl)-2-oxopropyl phosphate + L-glutamate. It participates in amino-acid biosynthesis; L-histidine biosynthesis; L-histidine from 5-phospho-alpha-D-ribose 1-diphosphate: step 7/9. The protein is Histidinol-phosphate aminotransferase of Ruegeria sp. (strain TM1040) (Silicibacter sp.).